Consider the following 147-residue polypeptide: Truncated RecQ DNA helicase-like protein C212.06c (147 aa).

The 72-residue stretch at 1-72 (MGVRLVVHYR…CVRSFLASEM (72 aa)) folds into the Helicase C-terminal domain. The disordered stretch occupies residues 100-147 (ETPKPAIATHSRYNASFSSSPPPQPGSSSGMSAMNTNTTSTTPVSGKT). Residues 125–141 (GSSSGMSAMNTNTTSTT) show a composition bias toward low complexity.

It belongs to the helicase family. RecQ subfamily.

Functionally, truncated ATP-dependent 3'-5' DNA helicase. This is Truncated RecQ DNA helicase-like protein C212.06c from Schizosaccharomyces pombe (strain 972 / ATCC 24843) (Fission yeast).